A 262-amino-acid polypeptide reads, in one-letter code: Flap endonuclease Xni (262 aa).

Residue aspartate 112 participates in Mg(2+) binding. The 5'-3' exonuclease domain occupies glutamine 171–threonine 258. The K(+) site is built by isoleucine 179, valine 190, and isoleucine 193. An interaction with DNA region spans residues glycine 192 to glycine 197.

The protein belongs to the Xni family. Mg(2+) is required as a cofactor. It depends on K(+) as a cofactor.

In terms of biological role, has flap endonuclease activity. During DNA replication, flap endonucleases cleave the 5'-overhanging flap structure that is generated by displacement synthesis when DNA polymerase encounters the 5'-end of a downstream Okazaki fragment. The chain is Flap endonuclease Xni from Psychromonas ingrahamii (strain DSM 17664 / CCUG 51855 / 37).